The chain runs to 512 residues: Histidine ammonia-lyase (512 aa).

The 5-imidazolinone (Ala-Gly) cross-link spans 144–146; sequence ASG. 2,3-didehydroalanine (Ser) is present on Ser145.

The protein belongs to the PAL/histidase family. Post-translationally, contains an active site 4-methylidene-imidazol-5-one (MIO), which is formed autocatalytically by cyclization and dehydration of residues Ala-Ser-Gly.

The protein resides in the cytoplasm. It carries out the reaction L-histidine = trans-urocanate + NH4(+). The protein operates within amino-acid degradation; L-histidine degradation into L-glutamate; N-formimidoyl-L-glutamate from L-histidine: step 1/3. This is Histidine ammonia-lyase from Desulfotalea psychrophila (strain LSv54 / DSM 12343).